The following is a 309-amino-acid chain: Porphobilinogen deaminase (309 aa).

C242 carries the post-translational modification S-(dipyrrolylmethanemethyl)cysteine.

Belongs to the HMBS family. As to quaternary structure, monomer. Requires dipyrromethane as cofactor.

It carries out the reaction 4 porphobilinogen + H2O = hydroxymethylbilane + 4 NH4(+). Its pathway is porphyrin-containing compound metabolism; protoporphyrin-IX biosynthesis; coproporphyrinogen-III from 5-aminolevulinate: step 2/4. In terms of biological role, tetrapolymerization of the monopyrrole PBG into the hydroxymethylbilane pre-uroporphyrinogen in several discrete steps. This Legionella pneumophila (strain Lens) protein is Porphobilinogen deaminase.